The following is a 506-amino-acid chain: Aminoaldehyde dehydrogenase 1b (506 aa).

Residue Asp-102 coordinates Na(+). Residues 162-164 (TPW) and 188-191 (KPSE) each bind NAD(+). Leu-192 is a binding site for Na(+). Residues 242–245 (SFET) and Glu-263 each bind NAD(+). Catalysis depends on Glu-263, which acts as the Proton acceptor. Cys-297 serves as the catalytic Nucleophile. Positions 396 and 462 each coordinate NAD(+).

The protein belongs to the aldehyde dehydrogenase family.

The enzyme catalyses 4-aminobutanal + NAD(+) + H2O = 4-aminobutanoate + NADH + 2 H(+). The catalysed reaction is 3-aminopropanal + NAD(+) + H2O = beta-alanine + NADH + 2 H(+). It carries out the reaction 4-(trimethylamino)butanal + NAD(+) + H2O = 4-(trimethylamino)butanoate + NADH + 2 H(+). It catalyses the reaction 4-guanidinobutanal + NAD(+) + H2O = 4-guanidinobutanoate + NADH + 2 H(+). The enzyme catalyses betaine aldehyde + NAD(+) + H2O = glycine betaine + NADH + 2 H(+). It functions in the pathway amine and polyamine biosynthesis; betaine biosynthesis via choline pathway; betaine from betaine aldehyde: step 1/1. Functionally, dehydrogenase that catalyzes the oxidation of several aminoaldehydes. Metabolizes and detoxifies aldehyde products of polyamine degradation to non-toxic amino acids. Catalyzes the oxidation of 4-aminobutanal and 3-aminopropanal to 4-aminobutanoate and beta-alanine, respectively. Catalyzes the oxidation of 4-(trimethylamino)butanal and 4-guanidinobutanal to 4-trimethylammoniobutanoate and 4-guanidinobutanoate, respectively. Catalyzes the oxidation of betaine aldehyde to glycine betaine. This chain is Aminoaldehyde dehydrogenase 1b, found in Zea mays (Maize).